The following is a 122-amino-acid chain: Large ribosomal subunit protein uL14 (122 aa).

This sequence belongs to the universal ribosomal protein uL14 family. As to quaternary structure, part of the 50S ribosomal subunit. Forms a cluster with proteins L3 and L19. In the 70S ribosome, L14 and L19 interact and together make contacts with the 16S rRNA in bridges B5 and B8.

Its function is as follows. Binds to 23S rRNA. Forms part of two intersubunit bridges in the 70S ribosome. The protein is Large ribosomal subunit protein uL14 of Clostridium tetani (strain Massachusetts / E88).